Consider the following 441-residue polypeptide: Deoxyguanosinetriphosphate triphosphohydrolase-like protein (441 aa).

In terms of domain architecture, HD spans 59–250; the sequence is RLTHSLEVSQ…MELADDTAYA (192 aa).

The protein belongs to the dGTPase family. Type 2 subfamily.

This Shewanella loihica (strain ATCC BAA-1088 / PV-4) protein is Deoxyguanosinetriphosphate triphosphohydrolase-like protein.